A 222-amino-acid polypeptide reads, in one-letter code: GTP-binding nuclear protein Ran-4 (222 aa).

The Small GTPase Ran-type domain maps to 10–174 (DLPTFKLLIV…LYLARRIAGD (165 aa)). 21–28 (DGGTGKTT) is a binding site for GTP. Residues 40 to 48 (HNTEPTLGV) form a switch-I region. Residues Gly-71, 125-128 (NKVD), and 153-155 (SAK) each bind GTP. The switch-II stretch occupies residues 71-87 (GQEKYSGLKDAYYIHGQ).

This sequence belongs to the small GTPase superfamily. Ran family. As to quaternary structure, found in a nuclear export complex with RanGTP, exportin and pre-miRNA.

Its subcellular location is the nucleus. Its function is as follows. GTP-binding protein involved in nucleocytoplasmic transport. Required for the import of protein into the nucleus and also for RNA export. Involved in chromatin condensation and control of cell cycle. The protein is GTP-binding nuclear protein Ran-4 (RAN4) of Arabidopsis thaliana (Mouse-ear cress).